A 343-amino-acid polypeptide reads, in one-letter code: Phosphoribosylformylglycinamidine cyclo-ligase (343 aa).

This sequence belongs to the AIR synthase family.

It localises to the cytoplasm. It catalyses the reaction 2-formamido-N(1)-(5-O-phospho-beta-D-ribosyl)acetamidine + ATP = 5-amino-1-(5-phospho-beta-D-ribosyl)imidazole + ADP + phosphate + H(+). It participates in purine metabolism; IMP biosynthesis via de novo pathway; 5-amino-1-(5-phospho-D-ribosyl)imidazole from N(2)-formyl-N(1)-(5-phospho-D-ribosyl)glycinamide: step 2/2. This is Phosphoribosylformylglycinamidine cyclo-ligase from Thermodesulfovibrio yellowstonii (strain ATCC 51303 / DSM 11347 / YP87).